We begin with the raw amino-acid sequence, 247 residues long: Homeobox-leucine zipper protein HOX17 (247 aa).

A disordered region spans residues 58 to 81 (ERAGLRGGGGSDEEDGGCGIDGSR). A DNA-binding region (homeobox) is located at residues 79-138 (GSRKKLRLSKDQSAVLEDSFREHPTLNPRQKATLAQQLGLRPRQVEVWFQNRRARTKLKQ). The interval 137–182 (KQTEVDCEFLKRCCETLTEENRRLQKEVQELRALKLVSPHLYMNMS) is leucine-zipper.

Belongs to the HD-ZIP homeobox family. Class II subfamily. As to expression, expressed in seedlings, roots, stems, leaf sheaths and blades and panicles.

The protein resides in the nucleus. Its function is as follows. Probable transcription factor. This Oryza sativa subsp. indica (Rice) protein is Homeobox-leucine zipper protein HOX17 (HOX17).